Reading from the N-terminus, the 302-residue chain is Short-chain dehydrogenase/reductase 1 (302 aa).

Residues 20-23 (NKGL), arginine 43, 71-72 (DV), and asparagine 98 each bind NADP(+). A substrate-binding site is contributed by serine 170. NADP(+)-binding positions include tyrosine 226, lysine 230, and 257-262 (VKTDIN). The Proton acceptor role is filled by tyrosine 226.

Belongs to the short-chain dehydrogenases/reductases (SDR) family. In terms of tissue distribution, mainly expressed in flowers and flower buds, to a lesser extent in leaves and, at low levels, in stems and roots.

It participates in secondary metabolite biosynthesis; terpenoid biosynthesis. In terms of biological role, component of the oleanane-type triterpene saponins (e.g. saponarioside A and saponarioside B) biosynthetic pathway, leading to the production of natural products with detergent properties used as traditional sources of soap. A dehydrogenase/reductase that, together with UGT74CD1, mediates the conversion of QA-tri to QA-triF; UGT74CD1 may transfer 4-keto-6-deoxy-glucose to QA-tri, which is in turn reduced to D-fucose by SDR1, thus leading to QA-triF formation via the initiation of the C-28 sugar chain. This is Short-chain dehydrogenase/reductase 1 from Saponaria officinalis (Common soapwort).